Here is a 239-residue protein sequence, read N- to C-terminus: Ribosomal RNA small subunit methyltransferase G (239 aa).

S-adenosyl-L-methionine-binding positions include Gly-77, Phe-82, Ala-128–Glu-129, and Arg-146. Positions Asp-215 to Lys-239 are disordered.

The protein belongs to the methyltransferase superfamily. RNA methyltransferase RsmG family.

It localises to the cytoplasm. Its function is as follows. Specifically methylates the N7 position of guanine in position 535 of 16S rRNA. This chain is Ribosomal RNA small subunit methyltransferase G, found in Staphylococcus aureus (strain bovine RF122 / ET3-1).